A 107-amino-acid chain; its full sequence is Regulatory protein SoxS (107 aa).

The 99-residue stretch at 8–106 folds into the HTH araC/xylS-type domain; that stretch reads QTLIEWIDEH…DRTPSDYRHR (99 aa). 2 consecutive DNA-binding regions (H-T-H motif) follow at residues 25 to 46 and 73 to 96; these read DVVA…RTVT and IFDI…RREF.

It localises to the cytoplasm. In terms of biological role, transcriptional activator of the superoxide response regulon of E.coli that includes at least 10 genes such as sodA, nfo, zwf and micF. Binds the DNA sequence 5'-GCACN(7)CAA-3'. It also facilitates the subsequent binding of RNA polymerase to the micF and the nfo promoters. The chain is Regulatory protein SoxS (soxS) from Salmonella typhimurium (strain LT2 / SGSC1412 / ATCC 700720).